Here is a 65-residue protein sequence, read N- to C-terminus: Protein translocase subunit SecE (65 aa).

A helical membrane pass occupies residues 38 to 58 (IVIVTVVFFLIFFYALDLGIG).

It belongs to the SecE/SEC61-gamma family. In terms of assembly, component of the Sec protein translocase complex. Heterotrimer consisting of SecY, SecE and SecG subunits. The heterotrimers can form oligomers, although 1 heterotrimer is thought to be able to translocate proteins. Interacts with the ribosome. Interacts with SecDF, and other proteins may be involved. Interacts with SecA.

It localises to the cell membrane. Functionally, essential subunit of the Sec protein translocation channel SecYEG. Clamps together the 2 halves of SecY. May contact the channel plug during translocation. The protein is Protein translocase subunit SecE of Staphylococcus carnosus (strain TM300).